The primary structure comprises 220 residues: Flagellin A2 (220 aa).

The propeptide occupies 1-11 (MFNNITDDDRG). N-linked (GlcNAc...) asparagine glycosylation is found at asparagine 78, asparagine 95, asparagine 112, and asparagine 124.

The protein belongs to the archaeal flagellin family. Glycosylated by a pentasaccharide similar to the S-layer glycoprotein, probably comprising a hexose, 2 hexuronic acids, a methyl ester of a hexuronic acid and mannose.

The protein localises to the archaeal flagellum. Functionally, flagellin that plays both structural and regulatory roles in flagella biosynthesis. Does not constitute a major flagellin in terms of abundance contrary to FlgA1: may regulate the flagella-dependent swimming motility depending on the relative abundance of FlgA1. Not involved in PibD-dependent surface adhesion. This chain is Flagellin A2 (flgA2), found in Haloferax volcanii (strain ATCC 29605 / DSM 3757 / JCM 8879 / NBRC 14742 / NCIMB 2012 / VKM B-1768 / DS2) (Halobacterium volcanii).